Reading from the N-terminus, the 155-residue chain is Transcriptional repressor NrdR (155 aa).

A zinc finger lies at 3 to 34 (CPFCGNVDTQVKDSRPAEDHVAIRRRRFCPAC). Residues 49–139 (LVVIKSSGKR…VYKNFQAADD (91 aa)) enclose the ATP-cone domain.

This sequence belongs to the NrdR family. The cofactor is Zn(2+).

In terms of biological role, negatively regulates transcription of bacterial ribonucleotide reductase nrd genes and operons by binding to NrdR-boxes. The protein is Transcriptional repressor NrdR of Dinoroseobacter shibae (strain DSM 16493 / NCIMB 14021 / DFL 12).